Consider the following 201-residue polypeptide: UPF0301 protein CE2927 (201 aa).

It belongs to the UPF0301 (AlgH) family.

This is UPF0301 protein CE2927 from Corynebacterium efficiens (strain DSM 44549 / YS-314 / AJ 12310 / JCM 11189 / NBRC 100395).